A 415-amino-acid chain; its full sequence is Gamma-glutamyl phosphate reductase (415 aa).

It belongs to the gamma-glutamyl phosphate reductase family.

The protein resides in the cytoplasm. It carries out the reaction L-glutamate 5-semialdehyde + phosphate + NADP(+) = L-glutamyl 5-phosphate + NADPH + H(+). Its pathway is amino-acid biosynthesis; L-proline biosynthesis; L-glutamate 5-semialdehyde from L-glutamate: step 2/2. Catalyzes the NADPH-dependent reduction of L-glutamate 5-phosphate into L-glutamate 5-semialdehyde and phosphate. The product spontaneously undergoes cyclization to form 1-pyrroline-5-carboxylate. In Bacillus cereus (strain ZK / E33L), this protein is Gamma-glutamyl phosphate reductase.